The primary structure comprises 1196 residues: Probable cation-transporting ATPase 13A4 (1196 aa).

The Cytoplasmic segment spans residues 1–31; it reads MGHFEKGQHALLNEGEENEMEIFGYRTQGCR. The stretch at 32–52 is an intramembrane region; that stretch reads KSLCLAGSIFSFGILPLVFYW. The Cytoplasmic segment spans residues 53 to 197; it reads RPAWHVWAHC…DVEVTPIWKL (145 aa). A helical membrane pass occupies residues 198 to 218; that stretch reads LIKEVLNPFYIFQLFSVCLWF. At 219–223 the chain is on the lumenal side; it reads SEDYK. A helical transmembrane segment spans residues 224 to 244; sequence EYAFAIIIMSIISISLTVYDL. Residues 245–400 are Cytoplasmic-facing; the sequence is REQSVKLHHL…NFQLYRDAIR (156 aa). A helical membrane pass occupies residues 401-421; it reads FLLCLVGTATIGMIYTLCVYV. Residues 422–436 lie on the Lumenal side of the membrane; sequence LSGEPPEEVVRKALD. A helical membrane pass occupies residues 437 to 457; that stretch reads VITIAVPPALPAALTTGIIYA. The Cytoplasmic segment spans residues 458–900; that stretch reads QRRLKKRGIF…KEGRAALVTS (443 aa). Catalysis depends on D486, which acts as the 4-aspartylphosphate intermediate. Residues D848 and D852 each contribute to the Mg(2+) site. A helical membrane pass occupies residues 901-921; sequence FCMFKYMALYSMIQYVGVLLL. The Lumenal portion of the chain corresponds to 922–932; the sequence is YWETNSLSNYQ. The helical transmembrane segment at 933-953 threads the bilayer; that stretch reads FLFQDLAITTLIGVTMNLNGA. Residues 954–972 lie on the Cytoplasmic side of the membrane; that stretch reads YPKLVPFRPAGRLISPPLL. The helical transmembrane segment at 973 to 993 threads the bilayer; it reads LSVIFNILLSLAMHIAGFILV. The Lumenal segment spans residues 994 to 1035; sequence QRQPWYSVEIHSACTVQNESISELTMSPTAPEKMESNSTFTS. Residues 1036 to 1056 form a helical membrane-spanning segment; sequence FENTTVWFLGTINCITVALVF. Topologically, residues 1057 to 1070 are cytoplasmic; the sequence is SKGKPFRQPTYTNY. Residues 1071–1091 traverse the membrane as a helical segment; it reads IFVLVLIIQLGVCLFILFADI. The Lumenal portion of the chain corresponds to 1092–1109; it reads PELYRRLDLLCTPVLWRA. The chain crosses the membrane as a helical span at residues 1110–1130; sequence SIVIMLSLNFIVSLVAEEAVI. Topologically, residues 1131-1196 are cytoplasmic; that stretch reads ENRALWMMIK…PVFESNEEQL (66 aa).

It belongs to the cation transport ATPase (P-type) (TC 3.A.3) family. Type V subfamily. As to expression, expressed in heart, placenta, liver, skeletal muscles, and pancreas. Lower levels of expression are also detected in brain, lung and kidney. Weakly expressed in the adult brain. Expression in fetal brain is higher than in adult brain, with levels similar to several other fetal tissues including spleen and skeletal muscle. In adult brain expressed at low levels in all tissues examined, including the temporal lobe and putamen. Highly expressed in the respiratory and integumentary systems.

Its subcellular location is the early endosome membrane. The protein resides in the late endosome membrane. It localises to the recycling endosome membrane. The enzyme catalyses ATP + H2O = ADP + phosphate + H(+). The polypeptide is Probable cation-transporting ATPase 13A4 (ATP13A4) (Homo sapiens (Human)).